The following is a 456-amino-acid chain: Bifunctional protein GlmU (456 aa).

The tract at residues 1–228 is pyrophosphorylase; it reads MPQNTLNIVI…SHLAAGVNNK (228 aa). UDP-N-acetyl-alpha-D-glucosamine-binding positions include 11–14, lysine 25, glutamine 75, 80–81, 102–104, glycine 138, glutamate 153, asparagine 168, and asparagine 226; these read LAAG, GT, and YGD. Aspartate 104 provides a ligand contact to Mg(2+). Asparagine 226 contacts Mg(2+). Residues 229–249 form a linker region; sequence LQLTELERIFQTEQAQELLKA. An N-acetyltransferase region spans residues 250–456; that stretch reads GVTLRDPARF…GWVRPEKDKQ (207 aa). Residues arginine 332 and lysine 350 each coordinate UDP-N-acetyl-alpha-D-glucosamine. Histidine 362 (proton acceptor) is an active-site residue. 2 residues coordinate UDP-N-acetyl-alpha-D-glucosamine: tyrosine 365 and asparagine 376. Residues alanine 379, 385–386, serine 404, alanine 422, and arginine 439 contribute to the acetyl-CoA site; that span reads NY.

In the N-terminal section; belongs to the N-acetylglucosamine-1-phosphate uridyltransferase family. It in the C-terminal section; belongs to the transferase hexapeptide repeat family. Homotrimer. It depends on Mg(2+) as a cofactor.

The protein localises to the cytoplasm. It catalyses the reaction alpha-D-glucosamine 1-phosphate + acetyl-CoA = N-acetyl-alpha-D-glucosamine 1-phosphate + CoA + H(+). The enzyme catalyses N-acetyl-alpha-D-glucosamine 1-phosphate + UTP + H(+) = UDP-N-acetyl-alpha-D-glucosamine + diphosphate. The protein operates within nucleotide-sugar biosynthesis; UDP-N-acetyl-alpha-D-glucosamine biosynthesis; N-acetyl-alpha-D-glucosamine 1-phosphate from alpha-D-glucosamine 6-phosphate (route II): step 2/2. It functions in the pathway nucleotide-sugar biosynthesis; UDP-N-acetyl-alpha-D-glucosamine biosynthesis; UDP-N-acetyl-alpha-D-glucosamine from N-acetyl-alpha-D-glucosamine 1-phosphate: step 1/1. It participates in bacterial outer membrane biogenesis; LPS lipid A biosynthesis. In terms of biological role, catalyzes the last two sequential reactions in the de novo biosynthetic pathway for UDP-N-acetylglucosamine (UDP-GlcNAc). The C-terminal domain catalyzes the transfer of acetyl group from acetyl coenzyme A to glucosamine-1-phosphate (GlcN-1-P) to produce N-acetylglucosamine-1-phosphate (GlcNAc-1-P), which is converted into UDP-GlcNAc by the transfer of uridine 5-monophosphate (from uridine 5-triphosphate), a reaction catalyzed by the N-terminal domain. The protein is Bifunctional protein GlmU of Neisseria meningitidis serogroup B (strain ATCC BAA-335 / MC58).